Here is a 77-residue protein sequence, read N- to C-terminus: Putative snRNP Sm-like protein (77 aa).

The Sm domain occupies 8–77; the sequence is PTLRMMLDYV…DSVVVITPAA (70 aa).

It belongs to the snRNP Sm proteins family.

This Aeropyrum pernix (strain ATCC 700893 / DSM 11879 / JCM 9820 / NBRC 100138 / K1) protein is Putative snRNP Sm-like protein.